We begin with the raw amino-acid sequence, 786 residues long: MSGVSEEDPEGLGPQGLPALGGACLVTVDKKLNVLTEKVDRLLHFQEDVTEKLQCVCQGMDHLEQGLHRLEASQELGLAGPGSTSPAAAQAAWPEVLELVRAVRQEGAQHGARLEALFKMVVAVDRAITLVGSTIQNSKVDDFILQGTVPWRKGSLADGPEENKEQAEVAGVKPKHVLNTGSVQAATSRALWEESQKQDTPVGTVEGLPLIIDTSLKGADLTQAGASLRQGVEALDPGQEPPPTEAESRLPALASEDTGTTLELSVAIDRISEVLTSLRMSQSAGEGTSSSKPDCSEPGPQPLGPLTTDSDIHSDEGLPRISVRMREMTTPEELFETQGGSPIGSAEAPGPGTVLEDQIPKGARPFPPLPKRSCNNGGASAEEATGPGAEPIRGPSLVTRDWRDEPVGTTDLQQGRDPGAVSPEPGKDHAAQGPGRTEAGRRVSSAAEAAIVVLDDSAAPPAPFEHRVVSIKDTLISTSYTVSQHEVLGGGRFGQVHRCTERSTGLALAAKIIKVKNIKDREDVKNEINIMNQLSHVNLIQLYDAFESKNSFTLIMEYVDGGELFDRITDEKYHLTELDVVLFTRQICEGVHYLHQHYILHLDLKPENILCVSQTGHQIKIIDFGLARRYKPREKLKVNFGTPEFLAPEVVNYEFVSFPTDMWSVGVITYMLLSGLSPFLGETDAETMNFIVNCSWDFDADTFKGLSEEAKDFVSRLLVKEKSCRMSATQCLKHEWLNHLIAKASGSNVRLRSQLLLQKYMAQRKWKKHFHVVTAVNRLRKFPTCP.

At S155 the chain carries Phosphoserine. 3 disordered regions span residues 233 to 258 (EALD…SEDT), 279 to 315 (RMSQ…IHSD), and 333 to 443 (ELFE…GRRV). Residues 279–293 (RMSQSAGEGTSSSKP) show a composition bias toward polar residues. 2 positions are modified to phosphoserine: S341 and S422. The 256-residue stretch at 482–737 (VSQHEVLGGG…ATQCLKHEWL (256 aa)) folds into the Protein kinase domain. ATP is bound by residues 488–496 (LGGGRFGQV) and K511. Residue D603 is the Proton acceptor of the active site.

It belongs to the protein kinase superfamily. CAMK Ser/Thr protein kinase family. The cofactor is Mg(2+). Phosphorylated on serine residues. In terms of tissue distribution, expressed in cardiomyocytes (at protein level). Up-regulated in heart after experimental myocardial infarction at the mRNA level.

Its subcellular location is the cytoplasm. The catalysed reaction is L-seryl-[myosin light chain] + ATP = O-phospho-L-seryl-[myosin light chain] + ADP + H(+). The enzyme catalyses L-threonyl-[myosin light chain] + ATP = O-phospho-L-threonyl-[myosin light chain] + ADP + H(+). Its function is as follows. Calmodulin-dependent kinase that phosphorylates MYL2 in vitro. Promotes sarcomere formation in cardiomyocytes. Increases cardiomyocyte contractility. This Rattus norvegicus (Rat) protein is Myosin light chain kinase 3 (Mylk3).